The primary structure comprises 298 residues: uncharacterized protein (298 aa).

The N-terminal stretch at 1 to 19 is a signal peptide; it reads MFRKFLFIQLLIVTSLVKA. The segment at 278 to 298 is disordered; that stretch reads RNNPPLKNNNAKSKNSYETYK. The span at 279–298 shows a compositional bias: low complexity; sequence NNPPLKNNNAKSKNSYETYK.

This sequence to R.prowazekii RP296.

This is an uncharacterized protein from Rickettsia prowazekii (strain Madrid E).